The sequence spans 129 residues: KVFGRCELAAAMKRHGLDNYRGYSLGNWVCAAKFESNFNSQATNRNTDGSTDYGVLQINSRWWCNDGRTPGSRNLCNIPCSALQSSDITATANCAKKIVSDGNGMNAWVAWRKHCKGTDVRVWIKGCRL.

Residues K1 to L129 form the C-type lysozyme domain. 4 disulfides stabilise this stretch: C6-C127, C30-C115, C64-C80, and C76-C94. Residues E35 and D52 contribute to the active site.

Belongs to the glycosyl hydrolase 22 family. Monomer.

It localises to the secreted. It carries out the reaction Hydrolysis of (1-&gt;4)-beta-linkages between N-acetylmuramic acid and N-acetyl-D-glucosamine residues in a peptidoglycan and between N-acetyl-D-glucosamine residues in chitodextrins.. In terms of biological role, lysozymes have primarily a bacteriolytic function; those in tissues and body fluids are associated with the monocyte-macrophage system and enhance the activity of immunoagents. The sequence is that of Lysozyme C (LYZ) from Numida meleagris (Helmeted guineafowl).